A 333-amino-acid polypeptide reads, in one-letter code: MTGIPTYHVLALSGGGYRGLYTATVLAELETVLGRPIASHFDLICGTSAGGMLALGLAAEIPAYELKALFEEQGSRIFGCRSLPRRLLGFWLTAKHDSAGLKEVLTERFQGTTIGDLKHRVLVPAVNYSTGRGQFFKTPHHPSFELDHRMKVVDVALATAAAPVYFPLARNDRGVFADGGLVGNAPGLFGLHEVKTFLAPKQDALVRVLAIGTMTIGATVRGGASLDRGFGKWRGGLFDLVISAQESSVDHMLRQALGNNYFQIDDKATPDQSKDVKALDRVSIGATNTLKDRGNHAAQRALGDPLFQPFRAHQADAPIFYHGPNKNVPEAAC.

Residues 10–191 form the PNPLA domain; it reads LALSGGGYRG…VGNAPGLFGL (182 aa). The GXGXXG motif lies at 14-19; that stretch reads GGGYRG. Residues 46 to 50 carry the GXSXG motif; sequence GTSAG. Catalysis depends on S48, which acts as the Nucleophile. D178 acts as the Proton acceptor in catalysis. The DGA/G motif lies at 178–180; that stretch reads DGG.

The protein belongs to the patatin family.

The enzyme catalyses a 1,2-diacyl-sn-glycero-3-phosphocholine + H2O = a 2-acyl-sn-glycero-3-phosphocholine + a fatty acid + H(+). The catalysed reaction is 1,2-di-(9Z-octadecenoyl)-sn-glycero-3-phosphoethanolamine + 2 H2O = sn-glycero-3-phosphoethanolamine + 2 (9Z)-octadecenoate + 2 H(+). Phospholipase activity is specifically activated upon cGAMP binding, which is produced by the cognate cyclic nucleotide synthase encoded in the same operon. Is not activated by cyclic dinucleotides 2',3'-cGAMP, c-diAMP or 3',3'-c-diGMP. Effector phospholipase of a CBASS antiviral system. CBASS (cyclic oligonucleotide-based antiphage signaling system) provides immunity against bacteriophages. The CD-NTase protein (CdnA) synthesizes cyclic nucleotides in response to infection; these serve as specific second messenger signals. The signals activate a diverse range of effectors, leading to bacterial cell death and thus abortive phage infection. A type II-A(GA) CBASS system. Functionally, phospholipase that is activated upon binding to the cyclic dinucleotide (CDN) second messenger 3',3'-cyclic GMP-AMP (cGAMP). Degrades phospholipids in the cell membrane. Its function is as follows. The capV-cdnA-cap2-cap3 operon provides about 10(4)-fold protection in strain BWHPSA011 against infection by phage PaMx41. In P.aeruginosa strain PAO1 it confers protection against phages PaMx41 and JBD18 but not JBD67 (JBD18 and JBD67 do not replicate in BWHPSA011 / Pa011). When acb2 in JBD67 is deleted this CBASS operon then protects against JDB67 also. This CBASS system limits prophage induction of lysogenized JBD67 as well as viral lytic replication. This is cGAMP-activated phospholipase from Pseudomonas aeruginosa (strain BWHPSA011 / Pa011).